Reading from the N-terminus, the 342-residue chain is Aspartate carbamoyltransferase catalytic subunit (342 aa).

Residues Arg-59 and Thr-60 each contribute to the carbamoyl phosphate site. An L-aspartate-binding site is contributed by Lys-87. Carbamoyl phosphate contacts are provided by Arg-109, His-142, and Gln-145. The L-aspartate site is built by Arg-182 and Arg-253. The carbamoyl phosphate site is built by Gly-294 and Pro-295.

The protein belongs to the aspartate/ornithine carbamoyltransferase superfamily. ATCase family. As to quaternary structure, heterododecamer (2C3:3R2) of six catalytic PyrB chains organized as two trimers (C3), and six regulatory PyrI chains organized as three dimers (R2).

It catalyses the reaction carbamoyl phosphate + L-aspartate = N-carbamoyl-L-aspartate + phosphate + H(+). It functions in the pathway pyrimidine metabolism; UMP biosynthesis via de novo pathway; (S)-dihydroorotate from bicarbonate: step 2/3. Catalyzes the condensation of carbamoyl phosphate and aspartate to form carbamoyl aspartate and inorganic phosphate, the committed step in the de novo pyrimidine nucleotide biosynthesis pathway. The polypeptide is Aspartate carbamoyltransferase catalytic subunit (Synechococcus sp. (strain WH7803)).